Consider the following 115-residue polypeptide: Basic leucine zipper transcriptional factor ATF-like (115 aa).

The segment at 1–57 is disordered; that stretch reads MQQEPDRNEQGYCSSPPSSNKQDSSDDTKKIQRREKNRIAAQKSRQRQTQKADSLHI. Residues 27–90 enclose the bZIP domain; that stretch reads DTKKIQRREK…KYLTCVLSTH (64 aa). The tract at residues 29–51 is basic motif; the sequence is KKIQRREKNRIAAQKSRQRQTQK. Positions 55 to 83 are leucine-zipper; that stretch reads LHIESENLERLNSALRGEISGLREELKYL.

It belongs to the bZIP family.

The protein resides in the nucleus. It localises to the cytoplasm. Its function is as follows. AP-1 family transcription factor that controls the differentiation of lineage-specific cells in the immune system: specifically mediates the differentiation of T-helper 17 cells (Th17), follicular T-helper cells (TfH), CD8(+) dendritic cells and class-switch recombination (CSR) in B-cells. In Xenopus tropicalis (Western clawed frog), this protein is Basic leucine zipper transcriptional factor ATF-like (batf).